The primary structure comprises 492 residues: Spore germination protein XA (492 aa).

7 helical membrane passes run 246 to 266 (FILL…FPFF), 285 to 305 (LLSL…VALV), 325 to 345 (EGIP…FELL), 353 to 373 (PAAF…QAAI), 377 to 397 (FVSP…FTLV), 413 to 433 (FLMS…LIVI), and 442 to 462 (GLPF…PSTF).

Belongs to the GerABKA family.

The protein resides in the cell membrane. Its function is as follows. May allow B.anthracis to germinate within phagocytic cells and therefore involved in virulence. This chain is Spore germination protein XA (gerXA), found in Bacillus anthracis.